A 173-amino-acid chain; its full sequence is Acetyl-CoA decarbonylase/synthase complex subunit epsilon (173 aa).

It belongs to the CdhB family. In terms of assembly, heterotetramer of two alpha and two epsilon subunits. The ACDS complex is made up of alpha, epsilon, beta, gamma and delta subunits with a probable stoichiometry of (alpha(2)epsilon(2))(4)-beta(8)-(gamma(1)delta(1))(8).

It functions in the pathway one-carbon metabolism; methanogenesis from acetate. Part of a complex that catalyzes the reversible cleavage of acetyl-CoA, allowing growth on acetate as sole source of carbon and energy. The alpha-epsilon subcomponent functions as a carbon monoxide dehydrogenase. The precise role of the epsilon subunit is unclear; it may have a stabilizing role within the alpha(2)epsilon(2) component and/or be involved in electron transfer to FAD during a potential FAD-mediated CO oxidation. The protein is Acetyl-CoA decarbonylase/synthase complex subunit epsilon of Methanothermobacter thermautotrophicus (strain ATCC 29096 / DSM 1053 / JCM 10044 / NBRC 100330 / Delta H) (Methanobacterium thermoautotrophicum).